Reading from the N-terminus, the 1171-residue chain is Structural maintenance of chromosomes protein 2-2 (1171 aa).

Residues 2–1158 enclose the Zinc-hook domain; the sequence is HIKEICLEGF…DVLFRTKFVD (1157 aa). Position 32–39 (32–39) interacts with ATP; it reads GLNGSGKS. Residues 172-510 adopt a coiled-coil conformation; the sequence is RMYENKKEAA…LANVQFTYRD (339 aa). An SMC hinge domain is found at 518–635; it reads SKVKGVVAKL…KTTDAAKEVA (118 aa). Residues 674 to 1026 are a coiled coil; it reads HDLAEAETKF…LDEKKKETLK (353 aa).

This sequence belongs to the SMC family. SMC2 subfamily. Forms a heterodimer with SMC4. Component of the condensin complex, which contains the SMC2 and SMC4 heterodimer, and three non SMC subunits that probably regulate the complex: CAPH, CAPD2 and CAPG. Highly expressed in roots and young floral buds.

The protein resides in the nucleus. Functionally, central component of the condensin complex, a complex required for conversion of interphase chromatin into mitotic-like condense chromosomes. The condensin complex probably introduces positive supercoils into relaxed DNA in the presence of type I topoisomerases and converts nicked DNA into positive knotted forms in the presence of type II topoisomerases. Also involved in chromosome segregation in meiosis. The protein is Structural maintenance of chromosomes protein 2-2 (SMC2-2) of Arabidopsis thaliana (Mouse-ear cress).